A 969-amino-acid chain; its full sequence is Chromosome transmission fidelity protein 18 homolog (969 aa).

The interval 30 to 97 (EGTRDQAPPG…APSSPMVKRP (68 aa)) is disordered. Thr-51 carries the post-translational modification Phosphothreonine. Position 221 is a phosphoserine (Ser-221). Disordered regions lie at residues 250 to 269 (SEGEEAVLEGPPAEEPAPGQ) and 318 to 340 (RKPRPGVETTRVGKEATAPGKWK). Residues 257-268 (LEGPPAEEPAPG) show a composition bias toward low complexity. 369–376 (GPPGLGKT) serves as a coordination point for ATP. Residues 856–889 (ARSGPQVDQGSSGPASLWTDSGEKGTRQPAPRNH) form a disordered region. A compositionally biased stretch (basic and acidic residues) spans 876–889 (SGEKGTRQPAPRNH).

This sequence belongs to the activator 1 small subunits family. CTF18 subfamily. As to quaternary structure, component of the CTF18-RFC complex, which consists of CTF18, CTF8, DCC1, RFC2, RFC3, RFC4 and RFC5. During assembly of the CTF18-RFC complex, CTF18 may first assemble into a subcomplex with RFC2, RFC3, RFC4 and RFC5. CTF18 then interacts directly with CTF8, which in turn interacts with DCC1. The CTF18-RFC complex associates with PCNA and with DNA polymerase POLH. The CTF18-RFC complex does not interact with the Rad9/Rad1/Hus1 complex. CTF18 interacts with SMC1A and RAD21. Interacts with DDX11.

It localises to the nucleus. Chromosome cohesion factor involved in sister chromatid cohesion and fidelity of chromosome transmission. Component of one of the cell nuclear antigen loader complexes, CTF18-replication factor C (CTF18-RFC), which consists of CTF18, CTF8, DCC1, RFC2, RFC3, RFC4 and RFC5. The CTF18-RFC complex binds to single-stranded and primed DNAs and has weak ATPase activity that is stimulated by the presence of primed DNA, replication protein A (RPA) and by proliferating cell nuclear antigen (PCNA). The CTF18-RFC complex catalyzes the ATP-dependent loading of PCNA onto primed and gapped DNA. Interacts with and stimulates DNA polymerase POLH. During DNA repair synthesis, involved in loading DNA polymerase POLE at the sites of local damage. This is Chromosome transmission fidelity protein 18 homolog (Chtf18) from Mus musculus (Mouse).